A 704-amino-acid chain; its full sequence is Polyribonucleotide nucleotidyltransferase (704 aa).

Positions 485 and 491 each coordinate Mg(2+). A KH domain is found at 552–611 (PKTETIQIDPDKIRSVIGAGGKVINKIIQDTGVKIDIKEDGSVFVSSSDHAGVKEAIKII). The region spanning 621-689 (GEIYLGKVTK…SQGRINLSRK (69 aa)) is the S1 motif domain.

Belongs to the polyribonucleotide nucleotidyltransferase family. Mg(2+) serves as cofactor.

It is found in the cytoplasm. It carries out the reaction RNA(n+1) + phosphate = RNA(n) + a ribonucleoside 5'-diphosphate. Its function is as follows. Involved in mRNA degradation. Catalyzes the phosphorolysis of single-stranded polyribonucleotides processively in the 3'- to 5'-direction. In Clostridium botulinum (strain Eklund 17B / Type B), this protein is Polyribonucleotide nucleotidyltransferase.